Here is a 522-residue protein sequence, read N- to C-terminus: Cytochrome P450 26C1 (522 aa).

Residues Leu9–Ala29 form a helical membrane-spanning segment. Cys459 is a heme binding site.

This sequence belongs to the cytochrome P450 family. It depends on heme as a cofactor. Detected in most tissues at very low level.

It is found in the membrane. It catalyses the reaction an organic molecule + reduced [NADPH--hemoprotein reductase] + O2 = an alcohol + oxidized [NADPH--hemoprotein reductase] + H2O + H(+). It carries out the reaction all-trans-retinoate + reduced [NADPH--hemoprotein reductase] + O2 = all-trans-4-hydroxyretinoate + oxidized [NADPH--hemoprotein reductase] + H2O + H(+). The enzyme catalyses all-trans-4-hydroxyretinoate + reduced [NADPH--hemoprotein reductase] + O2 = all-trans-4-oxoretinoate + oxidized [NADPH--hemoprotein reductase] + 2 H2O + H(+). The catalysed reaction is 9-cis-retinoate + reduced [NADPH--hemoprotein reductase] + O2 = 9-cis-4-hydroxyretinoate + oxidized [NADPH--hemoprotein reductase] + H2O + H(+). It catalyses the reaction 9-cis-4-hydroxyretinoate + reduced [NADPH--hemoprotein reductase] + O2 = 9-cis-4-oxoretinoate + oxidized [NADPH--hemoprotein reductase] + 2 H2O + H(+). It carries out the reaction all-trans-4-hydroxy-13,14-dihydroretinoate + reduced [NADPH--hemoprotein reductase] + O2 = all-trans-4-oxo-13,14-dihydroretinoate + oxidized [NADPH--hemoprotein reductase] + 2 H2O + H(+). The enzyme catalyses all-trans-13,14-dihydroretinoate + reduced [NADPH--hemoprotein reductase] + O2 = all-trans-4-hydroxy-13,14-dihydroretinoate + oxidized [NADPH--hemoprotein reductase] + H2O + H(+). Functionally, a cytochrome P450 monooxygenase involved in the metabolism of retinoates (RAs), the active metabolites of vitamin A, and critical signaling molecules in animals. RAs exist as at least four different isomers: all-trans-RA (atRA), 9-cis-RA, 13-cis-RA, and 9,13-dicis-RA, where atRA is considered to be the biologically active isomer, although 9-cis-RA and 13-cis-RA also have activity. Catalyzes the oxidation of atRA primarily at C-4. Oxidation of atRA limits its biological activity and initiates a degradative process leading to its eventual elimination, thereby contributes to the regulation of atRA homeostasis and signaling. Able to metabolize other RAs such as 9-cis with high efficiency. Can oxidize all-trans-13,14-dihydroretinoate (DRA) to metabolites which could include all-trans-4-oxo-DRA, all-trans-4-hydroxy-DRA, all-trans-5,8-epoxy-DRA, and all-trans-18-hydroxy-DRA. Shares sequence similarity with other CYP26 family members, but has higher affinity to 9-cis-RA and is much less sensitive to the inhibitory effects of ketoconazole. In cooperation with Cyp26a1, contributes to the CNS patterning and the development of regions of higher visual acuity. This Homo sapiens (Human) protein is Cytochrome P450 26C1 (CYP26C1).